The chain runs to 510 residues: 2,3-bisphosphoglycerate-independent phosphoglycerate mutase (510 aa).

Mn(2+) contacts are provided by aspartate 13 and serine 63. The active-site Phosphoserine intermediate is serine 63. Substrate is bound by residues histidine 124, 154 to 155, arginine 186, arginine 192, 262 to 265, and lysine 334; these read RD and RADR. 5 residues coordinate Mn(2+): aspartate 401, histidine 405, aspartate 442, histidine 443, and histidine 461.

It belongs to the BPG-independent phosphoglycerate mutase family. Monomer. It depends on Mn(2+) as a cofactor.

The enzyme catalyses (2R)-2-phosphoglycerate = (2R)-3-phosphoglycerate. It participates in carbohydrate degradation; glycolysis; pyruvate from D-glyceraldehyde 3-phosphate: step 3/5. In terms of biological role, catalyzes the interconversion of 2-phosphoglycerate and 3-phosphoglycerate. The sequence is that of 2,3-bisphosphoglycerate-independent phosphoglycerate mutase from Aliivibrio fischeri (strain ATCC 700601 / ES114) (Vibrio fischeri).